The sequence spans 260 residues: (R)-2-hydroxyglutaryl-CoA dehydratase activating ATPase (260 aa).

12-16 provides a ligand contact to ATP; it reads STASK. 2 residues coordinate [4Fe-4S] cluster: Cys127 and Cys166. Residues Gln220 and Gln243 each coordinate ATP.

This sequence belongs to the HgdC family. Homodimer. It depends on [4Fe-4S] cluster as a cofactor. Mg(2+) is required as a cofactor.

It carries out the reaction ATP + H2O = ADP + phosphate + H(+). It participates in amino-acid degradation; L-glutamate degradation via hydroxyglutarate pathway; crotonoyl-CoA from L-glutamate: step 4/5. With respect to regulation, inactivated by exposure to air within less than 15 minutes. Functionally, involved in the fermentation of L-glutamate via the hydroxyglutarate pathway. HgdC (CompA) has a very low ATPase activity, whose the role is to activate dehydratase HgdA-HgdB complex and then maintain an appropriate redox state via an ATP-dependent electron transfer. The dehydratase requires only catalytic amounts of ATP and substoichiometric amounts of HgdC (CompA) to be functional. The protein is (R)-2-hydroxyglutaryl-CoA dehydratase activating ATPase of Acidaminococcus fermentans (strain ATCC 25085 / DSM 20731 / CCUG 9996 / CIP 106432 / VR4).